The sequence spans 252 residues: Mediator of RNA polymerase II transcription subunit 8 (252 aa).

Residues Thr117–Gln142 are a coiled coil. The span at Pro215 to Gly224 shows a compositional bias: low complexity. A disordered region spans residues Pro215–Arg252. The segment covering Val237 to Arg252 has biased composition (polar residues).

The protein belongs to the Mediator complex subunit 8 family. In terms of assembly, component of the Mediator complex.

Its subcellular location is the nucleus. Component of the Mediator complex, a coactivator involved in the regulated transcription of nearly all RNA polymerase II-dependent genes. Mediator functions as a bridge to convey information from gene-specific regulatory proteins to the basal RNA polymerase II transcription machinery. Mediator is recruited to promoters by direct interactions with regulatory proteins and serves as a scaffold for the assembly of a functional preinitiation complex with RNA polymerase II and the general transcription factors. Required for activated transcription of the MtnA and MtnB genes. In Drosophila melanogaster (Fruit fly), this protein is Mediator of RNA polymerase II transcription subunit 8 (MED8).